The sequence spans 307 residues: Aspartate carbamoyltransferase catalytic subunit (307 aa).

Carbamoyl phosphate contacts are provided by Arg-54 and Thr-55. Lys-83 is a binding site for L-aspartate. Carbamoyl phosphate-binding residues include Arg-104, His-132, and Gln-135. Positions 165 and 228 each coordinate L-aspartate. Carbamoyl phosphate contacts are provided by Leu-267 and Pro-268.

This sequence belongs to the aspartate/ornithine carbamoyltransferase superfamily. ATCase family. Heterododecamer (2C3:3R2) of six catalytic PyrB chains organized as two trimers (C3), and six regulatory PyrI chains organized as three dimers (R2).

It carries out the reaction carbamoyl phosphate + L-aspartate = N-carbamoyl-L-aspartate + phosphate + H(+). The protein operates within pyrimidine metabolism; UMP biosynthesis via de novo pathway; (S)-dihydroorotate from bicarbonate: step 2/3. Its function is as follows. Catalyzes the condensation of carbamoyl phosphate and aspartate to form carbamoyl aspartate and inorganic phosphate, the committed step in the de novo pyrimidine nucleotide biosynthesis pathway. The chain is Aspartate carbamoyltransferase catalytic subunit from Clostridium botulinum (strain ATCC 19397 / Type A).